Here is a 251-residue protein sequence, read N- to C-terminus: Ubiquinone/menaquinone biosynthesis C-methyltransferase UbiE (251 aa).

S-adenosyl-L-methionine-binding positions include Thr74, Asp95, 123 to 124 (NA), and Ser140.

This sequence belongs to the class I-like SAM-binding methyltransferase superfamily. MenG/UbiE family.

The enzyme catalyses a 2-demethylmenaquinol + S-adenosyl-L-methionine = a menaquinol + S-adenosyl-L-homocysteine + H(+). It carries out the reaction a 2-methoxy-6-(all-trans-polyprenyl)benzene-1,4-diol + S-adenosyl-L-methionine = a 5-methoxy-2-methyl-3-(all-trans-polyprenyl)benzene-1,4-diol + S-adenosyl-L-homocysteine + H(+). It functions in the pathway quinol/quinone metabolism; menaquinone biosynthesis; menaquinol from 1,4-dihydroxy-2-naphthoate: step 2/2. Its pathway is cofactor biosynthesis; ubiquinone biosynthesis. In terms of biological role, methyltransferase required for the conversion of demethylmenaquinol (DMKH2) to menaquinol (MKH2) and the conversion of 2-polyprenyl-6-methoxy-1,4-benzoquinol (DDMQH2) to 2-polyprenyl-3-methyl-6-methoxy-1,4-benzoquinol (DMQH2). The polypeptide is Ubiquinone/menaquinone biosynthesis C-methyltransferase UbiE (Salmonella paratyphi A (strain AKU_12601)).